Reading from the N-terminus, the 119-residue chain is Large ribosomal subunit protein bL20 (119 aa).

It belongs to the bacterial ribosomal protein bL20 family.

Binds directly to 23S ribosomal RNA and is necessary for the in vitro assembly process of the 50S ribosomal subunit. It is not involved in the protein synthesizing functions of that subunit. This Rhodopseudomonas palustris (strain BisB5) protein is Large ribosomal subunit protein bL20.